Reading from the N-terminus, the 644-residue chain is Sodium/hydrogen exchanger 9 (644 aa).

The Lumenal portion of the chain corresponds to 1-20 (MERQRRFMSEKDEYQFQHQG). The chain crosses the membrane as a helical span at residues 21–41 (AVELLVFNFLLILTILTIWLF). Topologically, residues 42 to 45 (KNHR) are cytoplasmic. A helical membrane pass occupies residues 46-66 (FRFLHETGGAMVYGLIMGLIL). The Lumenal segment spans residues 67–126 (RYATAPTDIESGTVYDCGKLAFSPSTLLINITDQVYEYKYKREISQHNINPHLGNAILEK). A helical transmembrane segment spans residues 127–147 (MTFDPEIFFNVLLPPIIFHAG). Residues 148–164 (YSLKKRHFFQNLGSILT) are Cytoplasmic-facing. Residues 165–185 (YAFLGTAISCIVIGLIMYGFV) form a helical membrane-spanning segment. Topologically, residues 186–203 (KAMVYAGQLKNGDFHFTD) are lumenal. Residues 204–224 (CLFFGSLMSATDPVTVLAIFH) form a helical membrane-spanning segment. The Cytoplasmic segment spans residues 225 to 235 (ELHVDPDLYTL). A helical membrane pass occupies residues 236–256 (LFGESVLNDAVAIVLTYSISI). The Lumenal segment spans residues 257-277 (YSPKENPNAFDAAAFFQSVGN). The helical transmembrane segment at 278-298 (FLGIFAGSFAMGSAYAVVTAL) threads the bilayer. The Cytoplasmic portion of the chain corresponds to 299–301 (LTK). The next 2 helical transmembrane spans lie at 302–322 (FTKLCEFPMLETGLFFLLSWS) and 323–343 (AFLSAEAAGLTGIVAVLFCGV). Over 344-364 (TQAHYTYNNLSLDSKMRTKQL) the chain is Cytoplasmic. The chain crosses the membrane as a helical span at residues 365–385 (FEFMNFLAENVIFCYMGLALF). Thr386 is a topological domain (lumenal). Residues 387–407 (FQNHIFNALFILGAFLAIFVA) traverse the membrane as a helical segment. Over 408–429 (RACNIYPLSFLLNLGRKHKIPW) the chain is Cytoplasmic. Residues 430–450 (NFQHMMMFSGLRGAIAFALAI) traverse the membrane as a helical segment. Residues 451-465 (RDTESQPKQMMFSTT) lie on the Lumenal side of the membrane. Residues 466–486 (LLLVFFTVWVFGGGTTPMLTW) traverse the membrane as a helical segment. Topologically, residues 487 to 644 (LQIRVGVDLD…EQTPGQSQLN (158 aa)) are cytoplasmic. Residues 593–622 (QAASPCSPPTRLGLDQKAAPQTPGKENIYE) are disordered.

Belongs to the monovalent cation:proton antiporter 1 (CPA1) transporter (TC 2.A.36) family. As to quaternary structure, homodimer; phosphatidylinositol-4,5-bisphosphate (PIP2) and phosphatidylinositol 3,4,5-trisphosphate (PIP3) could be involved in the dimer stabilization. Interacts (via the C-terminus) with RACK1. Interacts with CHP1.

The protein localises to the late endosome membrane. It localises to the early endosome membrane. Its subcellular location is the recycling endosome membrane. The protein resides in the cell membrane. It is found in the cytoplasmic vesicle. The protein localises to the phagosome membrane. The catalysed reaction is Na(+)(in) + H(+)(out) = Na(+)(out) + H(+)(in). The enzyme catalyses K(+)(in) + H(+)(out) = K(+)(out) + H(+)(in). Its function is as follows. Endosomal Na(+), K(+)/H(+) antiporter. Mediates the electroneutral exchange of endosomal luminal H(+) for a cytosolic Na(+) or K(+). By facilitating proton efflux, SLC9A9 counteracts the acidity generated by vacuolar (V)-ATPase, thereby limiting luminal acidification. Regulates organellar pH and consequently, endosome maturation and endocytic trafficking of plasma membrane receptors and neurotransporters. Promotes the recycling of transferrin receptors back to the cell surface to facilitate additional iron uptake in the brain. Regulates synaptic transmission by regulating the luminal pH of axonal endosomes. Regulates phagosome lumenal pH, thus affecting phagosome maturation, and consequently, microbicidal activity in macrophages. Can also be active at the cell surface of specialized cells, e.g., in the inner ear hair bundles uses the high K(+) of the endolymph to regulate intracelular pH. This chain is Sodium/hydrogen exchanger 9 (SLC9A9), found in Equus caballus (Horse).